The chain runs to 359 residues: Fructose-bisphosphate aldolase (359 aa).

Residue Ser62 coordinates D-glyceraldehyde 3-phosphate. Catalysis depends on Asp110, which acts as the Proton donor. The Zn(2+) site is built by His111, Asp145, Glu175, and His227. Gly228 is a dihydroxyacetone phosphate binding site. His265 is a binding site for Zn(2+). Residues 266 to 268 (GGS) and 287 to 290 (NIDT) each bind dihydroxyacetone phosphate.

This sequence belongs to the class II fructose-bisphosphate aldolase family. As to quaternary structure, homodimer. Zn(2+) is required as a cofactor.

It carries out the reaction beta-D-fructose 1,6-bisphosphate = D-glyceraldehyde 3-phosphate + dihydroxyacetone phosphate. It participates in carbohydrate degradation; glycolysis; D-glyceraldehyde 3-phosphate and glycerone phosphate from D-glucose: step 4/4. Functionally, catalyzes the aldol condensation of dihydroxyacetone phosphate (DHAP or glycerone-phosphate) with glyceraldehyde 3-phosphate (G3P) to form fructose 1,6-bisphosphate (FBP) in gluconeogenesis and the reverse reaction in glycolysis. In Haemophilus influenzae (strain ATCC 51907 / DSM 11121 / KW20 / Rd), this protein is Fructose-bisphosphate aldolase (fba).